We begin with the raw amino-acid sequence, 485 residues long: Inosine-5'-monophosphate dehydrogenase (485 aa).

CBS domains lie at 99–154 (IVED…LVKE) and 156–215 (MTKD…VRDE). NAD(+) contacts are provided by residues aspartate 247 and 294 to 296 (GIG). K(+)-binding residues include glycine 296 and glycine 298. An IMP-binding site is contributed by serine 299. Cysteine 301 serves as a coordination point for K(+). Residue cysteine 301 is the Thioimidate intermediate of the active site. IMP contacts are provided by residues 334-336 (DGG), 357-358 (GN), and 381-385 (YRGMG). Arginine 397 (proton acceptor) is an active-site residue. IMP is bound at residue glutamate 412. Glutamate 466, serine 467, and histidine 468 together coordinate K(+).

The protein belongs to the IMPDH/GMPR family. In terms of assembly, homotetramer. K(+) serves as cofactor.

The enzyme catalyses IMP + NAD(+) + H2O = XMP + NADH + H(+). The protein operates within purine metabolism; XMP biosynthesis via de novo pathway; XMP from IMP: step 1/1. With respect to regulation, mycophenolic acid (MPA) is a non-competitive inhibitor that prevents formation of the closed enzyme conformation by binding to the same site as the amobile flap. In contrast, mizoribine monophosphate (MZP) is a competitive inhibitor that induces the closed conformation. MPA is a potent inhibitor of mammalian IMPDHs but a poor inhibitor of the bacterial enzymes. MZP is a more potent inhibitor of bacterial IMPDH. In terms of biological role, catalyzes the conversion of inosine 5'-phosphate (IMP) to xanthosine 5'-phosphate (XMP), the first committed and rate-limiting step in the de novo synthesis of guanine nucleotides, and therefore plays an important role in the regulation of cell growth. This is Inosine-5'-monophosphate dehydrogenase from Pyrococcus abyssi (strain GE5 / Orsay).